The sequence spans 346 residues: Inositol 2-dehydrogenase/D-chiro-inositol 3-dehydrogenase (346 aa).

Belongs to the Gfo/Idh/MocA family. As to quaternary structure, homotetramer.

The enzyme catalyses myo-inositol + NAD(+) = scyllo-inosose + NADH + H(+). It catalyses the reaction 1D-chiro-inositol + NAD(+) = scyllo-inosine + NADH + H(+). It functions in the pathway polyol metabolism; myo-inositol degradation into acetyl-CoA; acetyl-CoA from myo-inositol: step 1/7. Involved in the oxidation of myo-inositol (MI) and D-chiro-inositol (DCI) to 2-keto-myo-inositol (2KMI or 2-inosose) and 1-keto-D-chiro-inositol (1KDCI), respectively. This Lacticaseibacillus casei (Lactobacillus casei) protein is Inositol 2-dehydrogenase/D-chiro-inositol 3-dehydrogenase.